The following is a 432-amino-acid chain: Malate dehydrogenase [NADP], chloroplastic (432 aa).

Residues 1–40 (MGLSTVYSPAGPRLVPAPLGRCRSAQPRRPRRAPLATVRC) constitute a chloroplast transit peptide. The segment at 18 to 37 (PLGRCRSAQPRRPRRAPLAT) is disordered. Cys-67 and Cys-72 are joined by a disulfide. 96 to 102 (GAAGMIS) is an NADP(+) binding site. Positions 177 and 183 each coordinate substrate. Asn-190 contacts NADP(+). Gln-197 lines the NAD(+) pocket. 214–216 (VGN) lines the NADP(+) pocket. Residues Asn-216 and Arg-247 each coordinate substrate. His-272 functions as the Proton acceptor in the catalytic mechanism. A disulfide bond links Cys-408 and Cys-420.

This sequence belongs to the LDH/MDH superfamily. MDH type 2 family. In terms of assembly, homodimer.

It is found in the plastid. The protein resides in the chloroplast. It catalyses the reaction (S)-malate + NADP(+) = oxaloacetate + NADPH + H(+). Its activity is regulated as follows. Chloroplast NADP-MDH is activated upon illumination. In order to be enzymatically active, disulfide bridges on the protein must be reduced by thioredoxin which receives electrons from ferredoxin and the electron transport system of photosynthesis. Its function is as follows. The chloroplastic, NADP-dependent form is essential for the photosynthesis C4 cycle, which allows plants to circumvent the problem of photorespiration. In C4 plants, NADP-MDH activity acts to convert oxaloacetate to malate in chloroplasts of mesophyll cells for transport to the bundle sheath cells. In Zea mays (Maize), this protein is Malate dehydrogenase [NADP], chloroplastic.